The chain runs to 152 residues: Ribosome maturation factor RimP (152 aa).

This sequence belongs to the RimP family.

The protein resides in the cytoplasm. Functionally, required for maturation of 30S ribosomal subunits. The polypeptide is Ribosome maturation factor RimP (Alkalilimnicola ehrlichii (strain ATCC BAA-1101 / DSM 17681 / MLHE-1)).